A 169-amino-acid chain; its full sequence is S-ribosylhomocysteine lyase (169 aa).

Positions 54, 58, and 128 each coordinate Fe cation.

Belongs to the LuxS family. In terms of assembly, homodimer. Requires Fe cation as cofactor.

The catalysed reaction is S-(5-deoxy-D-ribos-5-yl)-L-homocysteine = (S)-4,5-dihydroxypentane-2,3-dione + L-homocysteine. In terms of biological role, involved in the synthesis of autoinducer 2 (AI-2) which is secreted by bacteria and is used to communicate both the cell density and the metabolic potential of the environment. The regulation of gene expression in response to changes in cell density is called quorum sensing. Catalyzes the transformation of S-ribosylhomocysteine (RHC) to homocysteine (HC) and 4,5-dihydroxy-2,3-pentadione (DPD). The sequence is that of S-ribosylhomocysteine lyase from Shewanella piezotolerans (strain WP3 / JCM 13877).